The chain runs to 1011 residues: Lysosomal alpha-mannosidase (1011 aa).

Positions 1–49 (MGAYARASGVCARGCLDSAGPWTMSRALRPPLPPLCFFLLLLAAAGARA) are cleaved as a signal peptide. Intrachain disulfides connect Cys-55-Cys-358 and Cys-268-Cys-273. Positions 72 and 74 each coordinate Zn(2+). The N-linked (GlcNAc...) asparagine glycan is linked to Asn-133. Position 196 (Asp-196) interacts with Zn(2+). The Nucleophile role is filled by Asp-196. Residues Asn-310 and Asn-367 are each glycosylated (N-linked (GlcNAc...) asparagine). Cystine bridges form between Cys-412–Cys-472 and Cys-493–Cys-501. Residue His-446 coordinates Zn(2+). 8 N-linked (GlcNAc...) asparagine glycosylation sites follow: Asn-497, Asn-645, Asn-651, Asn-692, Asn-766, Asn-832, Asn-930, and Asn-989.

Belongs to the glycosyl hydrolase 38 family. It depends on Zn(2+) as a cofactor. In terms of processing, first processed into 3 peptides of 70 kDa, 42 kDa (D) and 13/15 kDa (E). The 70 kDa peptide is further processed into three peptides (A, B and C). The A, B and C peptides are disulfide-linked. Post-translationally, heavily glycosylated.

It is found in the lysosome. It catalyses the reaction Hydrolysis of terminal, non-reducing alpha-D-mannose residues in alpha-D-mannosides.. Necessary for the catabolism of N-linked carbohydrates released during glycoprotein turnover. Cleaves all known types of alpha-mannosidic linkages. This chain is Lysosomal alpha-mannosidase (MAN2B1), found in Homo sapiens (Human).